The following is an 842-amino-acid chain: Protein translocase subunit SecA (842 aa).

Residues Q85, 103–107 (GEGKT), and D493 contribute to the ATP site. Zn(2+) contacts are provided by C825, C827, C836, and H837.

This sequence belongs to the SecA family. As to quaternary structure, monomer and homodimer. Part of the essential Sec protein translocation apparatus which comprises SecA, SecYEG and auxiliary proteins SecDF. Other proteins may also be involved. The cofactor is Zn(2+).

The protein localises to the cell membrane. It is found in the cytoplasm. The catalysed reaction is ATP + H2O + cellular proteinSide 1 = ADP + phosphate + cellular proteinSide 2.. In terms of biological role, part of the Sec protein translocase complex. Interacts with the SecYEG preprotein conducting channel. Has a central role in coupling the hydrolysis of ATP to the transfer of proteins into and across the cell membrane, serving as an ATP-driven molecular motor driving the stepwise translocation of polypeptide chains across the membrane. The protein is Protein translocase subunit SecA of Streptococcus equi subsp. zooepidemicus (strain MGCS10565).